We begin with the raw amino-acid sequence, 420 residues long: Serine palmitoyltransferase (420 aa).

Pyridoxal 5'-phosphate is bound by residues 134–135 (GY), His-234, Thr-262, and Ser-264. N6-(pyridoxal phosphate)lysine is present on Lys-265.

It belongs to the class-II pyridoxal-phosphate-dependent aminotransferase family. As to quaternary structure, homodimer. It depends on pyridoxal 5'-phosphate as a cofactor.

The protein localises to the cytoplasm. The enzyme catalyses L-serine + hexadecanoyl-CoA + H(+) = 3-oxosphinganine + CO2 + CoA. The protein operates within lipid metabolism; sphingolipid metabolism. With respect to regulation, not inhibited by relatively high concentrations of palmitoyl-CoA. Inhibited by both D-cycloserine (DCS) and L-cycloserine (LCS), which inactivate SPT by transamination to form a free pyridoxamine 5'-phosphate (PMP) and beta-aminooxyacetaldehyde that remain bound at the active site. Inhibition is reversed by incubation with excess pyridoxal phosphate. Inhibited by the fungal natural product myriocin, which acts as a competitive inhibitor for both L-serine and palmitoyl-CoA substrates. Its function is as follows. Catalyzes the condensation of L-serine with palmitoyl-CoA (hexadecanoyl-CoA) to produce 3-oxosphinganine. Exhibits a broad substrate specificity concerning the chain length and the degree of unsaturation of acyl-CoA. This Sphingomonas paucimobilis (Pseudomonas paucimobilis) protein is Serine palmitoyltransferase.